A 209-amino-acid chain; its full sequence is Large ribosomal subunit protein uL3 (209 aa).

The disordered stretch occupies residues 133–152 (THGNSLSHRVPGSIGQNQTP). Residue Gln-150 is modified to N5-methylglutamine.

The protein belongs to the universal ribosomal protein uL3 family. In terms of assembly, part of the 50S ribosomal subunit. Forms a cluster with proteins L14 and L19. In terms of processing, methylated by PrmB.

One of the primary rRNA binding proteins, it binds directly near the 3'-end of the 23S rRNA, where it nucleates assembly of the 50S subunit. This chain is Large ribosomal subunit protein uL3, found in Shigella sonnei (strain Ss046).